The sequence spans 449 residues: Aspartate aminotransferase 3, chloroplastic (449 aa).

The transit peptide at 1-43 (MKTTHFSSSSSSDRRIGALLRHLNSGSDSDNLSSLYASPTSGG) directs the protein to the chloroplast. G81, W178, and N231 together coordinate L-aspartate. An N6-(pyridoxal phosphate)lysine modification is found at K295. R423 is an L-aspartate binding site.

The protein belongs to the class-I pyridoxal-phosphate-dependent aminotransferase family. As to quaternary structure, homodimer. It depends on pyridoxal 5'-phosphate as a cofactor. As to expression, expressed in roots, cauline leaves, flowers, hypocotyl epidermis and root hair cells.

The protein localises to the plastid. It localises to the chloroplast. The catalysed reaction is L-aspartate + 2-oxoglutarate = oxaloacetate + L-glutamate. In terms of biological role, amino acid aminotransferase important for the metabolism of amino acids and Krebs-cycle related organic acids. No activity with D-Asp or D-Ala as amino donors. In plants, it is involved in nitrogen metabolism and in aspects of carbon and energy metabolism. The sequence is that of Aspartate aminotransferase 3, chloroplastic (ASP3) from Arabidopsis thaliana (Mouse-ear cress).